Reading from the N-terminus, the 593-residue chain is Aspartate--tRNA ligase (593 aa).

Position 180 (Glu-180) interacts with L-aspartate. The segment at 204–207 is aspartate; that stretch reads QLFK. L-aspartate is bound at residue Arg-226. ATP-binding positions include 226–228 and Gln-235; that span reads RDE. His-454 serves as a coordination point for L-aspartate. Glu-488 contacts ATP. L-aspartate is bound at residue Arg-495. ATP is bound at residue 540–543; the sequence is GFDR.

This sequence belongs to the class-II aminoacyl-tRNA synthetase family. Type 1 subfamily. In terms of assembly, homodimer.

It is found in the cytoplasm. It catalyses the reaction tRNA(Asp) + L-aspartate + ATP = L-aspartyl-tRNA(Asp) + AMP + diphosphate. Its function is as follows. Catalyzes the attachment of L-aspartate to tRNA(Asp) in a two-step reaction: L-aspartate is first activated by ATP to form Asp-AMP and then transferred to the acceptor end of tRNA(Asp). In Clostridium novyi (strain NT), this protein is Aspartate--tRNA ligase.